A 215-amino-acid polypeptide reads, in one-letter code: MSKVYDWFEERLEIQAIADDITSKYVPPHVNIFYCLGGITLTCFLVQVATGFAMTFYYRPTVTEAFASVQYIMTEANFGWLIRSVHRWSASMMVLMMILHVFRVYLTGGFKKPRELTWVTGVVLAVLTASFGVTGYSLPRDQIGYWAVKIVTGVPEAIPVIGSPLVELLRGSASVGQSTLTRFYSLHTFVLPLLTAVFMLMHFPMIRKQGISGPL.

A helical transmembrane segment spans residues 32–52 (IFYCLGGITLTCFLVQVATGF). Cysteine 35 contributes to the heme c binding site. Heme b is bound by residues histidine 86 and histidine 100. 3 helical membrane-spanning segments follow: residues 90-110 (ASMMVLMMILHVFRVYLTGGF), 116-136 (LTWVTGVVLAVLTASFGVTGY), and 186-206 (LHTFVLPLLTAVFMLMHFPMI). Heme b-binding residues include histidine 187 and histidine 202.

It belongs to the cytochrome b family. PetB subfamily. In terms of assembly, the 4 large subunits of the cytochrome b6-f complex are cytochrome b6, subunit IV (17 kDa polypeptide, PetD), cytochrome f and the Rieske protein, while the 4 small subunits are PetG, PetL, PetM and PetN. The complex functions as a dimer. Heme b serves as cofactor. The cofactor is heme c.

It localises to the plastid. Its subcellular location is the chloroplast thylakoid membrane. Its function is as follows. Component of the cytochrome b6-f complex, which mediates electron transfer between photosystem II (PSII) and photosystem I (PSI), cyclic electron flow around PSI, and state transitions. This is Cytochrome b6 from Cucumis sativus (Cucumber).